Here is a 546-residue protein sequence, read N- to C-terminus: MAAKEIIFSDVARAKLTEGVNILANAVKVTLGPKGRNVVLERSFGAPVVTKDGVSVAKEIELADKLQNIGAQLVKEVASRTSDAAGDGTTTATVLAQAIVREGQKYVAAGLNPLDLKRGIDKAVAAAVDELKKISRPTTTSKEIAQVATISANGEESIGQRIAEAIDRVGKEGVITVEDGKSLADELDVVEGLQFDRGYLSPYFINNPDKQIAEIESPYILLHDKKISNIRDLLPVLEQVAKSGRPLLIIAEDVEGEALATLVVNNIRGILKTVAVKAPGFGDRRKALLEDIAILTGGQVIAEETGLTLEKATLAELGQAKRIEVGKENTTVIDGAGDAKNIEARVKQIRVQIDEATSDYDREKLQERVAKLAGGVAVIKVGGATEIEVKEKKDRVDDALHATRAAVEEGIVPGGGVALIRVRQAIRELQGVNADQNAGIKIVLRALEEPLRQIVTNAGEEASVVVAKVAEGSGNFGYNAQTGVYGDLVESGVLDPTKVTRTALQNAASVAGLLLTTDATVFEAPKDAAPTAAPGGPGAGGPGFDF.

ATP is bound by residues 30 to 33, Lys51, 87 to 91, Gly415, and Asp495; these read TLGP and DGTTT. The tract at residues 527-546 is disordered; that stretch reads DAAPTAAPGGPGAGGPGFDF. Gly residues predominate over residues 535 to 546; the sequence is GGPGAGGPGFDF.

It belongs to the chaperonin (HSP60) family. Forms a cylinder of 14 subunits composed of two heptameric rings stacked back-to-back. Interacts with the co-chaperonin GroES.

The protein localises to the cytoplasm. It carries out the reaction ATP + H2O + a folded polypeptide = ADP + phosphate + an unfolded polypeptide.. In terms of biological role, together with its co-chaperonin GroES, plays an essential role in assisting protein folding. The GroEL-GroES system forms a nano-cage that allows encapsulation of the non-native substrate proteins and provides a physical environment optimized to promote and accelerate protein folding. This chain is Chaperonin GroEL 1, found in Burkholderia lata (strain ATCC 17760 / DSM 23089 / LMG 22485 / NCIMB 9086 / R18194 / 383).